Consider the following 348-residue polypeptide: Protein RecA (348 aa).

G65–T72 serves as a coordination point for ATP.

The protein belongs to the RecA family.

It is found in the cytoplasm. Its function is as follows. Can catalyze the hydrolysis of ATP in the presence of single-stranded DNA, the ATP-dependent uptake of single-stranded DNA by duplex DNA, and the ATP-dependent hybridization of homologous single-stranded DNAs. It interacts with LexA causing its activation and leading to its autocatalytic cleavage. This Enterococcus gallinarum protein is Protein RecA.